A 254-amino-acid chain; its full sequence is Ribose-5-phosphate isomerase A (254 aa).

Substrate-binding positions include 45 to 48, 105 to 108, and 118 to 121; these read TGST, DGAD, and KGGG. The active-site Proton acceptor is E127. Residue K145 participates in substrate binding.

Belongs to the ribose 5-phosphate isomerase family. In terms of assembly, homodimer.

The enzyme catalyses aldehydo-D-ribose 5-phosphate = D-ribulose 5-phosphate. Its pathway is carbohydrate degradation; pentose phosphate pathway; D-ribose 5-phosphate from D-ribulose 5-phosphate (non-oxidative stage): step 1/1. Its function is as follows. Catalyzes the reversible conversion of ribose-5-phosphate to ribulose 5-phosphate. This chain is Ribose-5-phosphate isomerase A, found in Treponema pallidum subsp. pallidum (strain SS14).